The following is a 199-amino-acid chain: Adenylate kinase (199 aa).

Residue 8 to 13 (GAGKGT) coordinates ATP. The NMP stretch occupies residues 28 to 57 (STGDIFRANIKNKTELGQQVKAIVDAGDYV). Residues T29, R34, 55 to 57 (DYV), 83 to 86 (GYPR), and Q90 contribute to the AMP site. The LID stretch occupies residues 124 to 134 (KRAREQGRADD). R125 lines the ATP pocket. Residues R131 and R142 each contribute to the AMP site. G170 contributes to the ATP binding site.

Belongs to the adenylate kinase family. Monomer.

Its subcellular location is the cytoplasm. It carries out the reaction AMP + ATP = 2 ADP. It functions in the pathway purine metabolism; AMP biosynthesis via salvage pathway; AMP from ADP: step 1/1. Catalyzes the reversible transfer of the terminal phosphate group between ATP and AMP. Plays an important role in cellular energy homeostasis and in adenine nucleotide metabolism. The polypeptide is Adenylate kinase (Leifsonia xyli subsp. xyli (strain CTCB07)).